The chain runs to 400 residues: Phosphoglycerate kinase (400 aa).

Residues 19 to 21 (DLN), Arg38, 61 to 64 (HLGR), Arg124, and Arg161 contribute to the substrate site. Residues Lys211, Gly299, Glu330, and 356 to 359 (GGDS) each bind ATP.

The protein belongs to the phosphoglycerate kinase family. In terms of assembly, monomer.

The protein localises to the cytoplasm. It catalyses the reaction (2R)-3-phosphoglycerate + ATP = (2R)-3-phospho-glyceroyl phosphate + ADP. It participates in carbohydrate degradation; glycolysis; pyruvate from D-glyceraldehyde 3-phosphate: step 2/5. The protein is Phosphoglycerate kinase of Frankia casuarinae (strain DSM 45818 / CECT 9043 / HFP020203 / CcI3).